We begin with the raw amino-acid sequence, 214 residues long: Thioredoxin-like 4, chloroplastic (214 aa).

The segment covering Met-1 to Ser-20 has biased composition (low complexity). The interval Met-1–Pro-68 is disordered. A chloroplast-targeting transit peptide spans Met-1–Val-71. The segment covering Leu-21–Pro-34 has biased composition (pro residues). The segment covering Ser-42–Ser-53 has biased composition (low complexity). The 128-residue stretch at Val-72–Ala-199 folds into the Thioredoxin domain. Residues Cys-117 and Cys-120 each act as nucleophile in the active site. A disulfide bridge connects residues Cys-117 and Cys-120.

It belongs to the thioredoxin family.

The protein resides in the plastid. The protein localises to the chloroplast. Its function is as follows. Probable thiol-disulfide oxidoreductase that may participate in various redox reactions. This Oryza sativa subsp. japonica (Rice) protein is Thioredoxin-like 4, chloroplastic.